A 334-amino-acid polypeptide reads, in one-letter code: Protein-methionine-sulfoxide reductase catalytic subunit MsrP (334 aa).

The tat-type signal signal peptide spans 1-44; sequence MKKIRPLTEADVTAESAFFMQRRQVLKALGISAAALSLPSTAQA. Mo-molybdopterin is bound by residues asparagine 88, 91-92, cysteine 146, threonine 181, asparagine 233, arginine 238, and 249-251; these read YE and GIK.

The protein belongs to the MsrP family. In terms of assembly, heterodimer of a catalytic subunit (MsrP) and a heme-binding subunit (MsrQ). It depends on Mo-molybdopterin as a cofactor. Predicted to be exported by the Tat system. The position of the signal peptide cleavage has not been experimentally proven.

Its subcellular location is the periplasm. The catalysed reaction is L-methionyl-[protein] + a quinone + H2O = L-methionyl-(S)-S-oxide-[protein] + a quinol. It carries out the reaction L-methionyl-[protein] + a quinone + H2O = L-methionyl-(R)-S-oxide-[protein] + a quinol. Its function is as follows. Part of the MsrPQ system that repairs oxidized periplasmic proteins containing methionine sulfoxide residues (Met-O), using respiratory chain electrons. Thus protects these proteins from oxidative-stress damage caused by reactive species of oxygen and chlorine generated by the host defense mechanisms. MsrPQ is essential for the maintenance of envelope integrity under bleach stress, rescuing a wide series of structurally unrelated periplasmic proteins from methionine oxidation, including the primary periplasmic chaperone SurA and the lipoprotein Pal. The catalytic subunit MsrP is non-stereospecific, being able to reduce both (R-) and (S-) diastereoisomers of methionine sulfoxide. The polypeptide is Protein-methionine-sulfoxide reductase catalytic subunit MsrP (Salmonella dublin (strain CT_02021853)).